The sequence spans 201 residues: LexA repressor (201 aa).

The segment at residues 27 to 47 is a DNA-binding region (H-T-H motif); the sequence is RMEISSAFGFASPNAAEDHLK. Catalysis depends on for autocatalytic cleavage activity residues Ser-116 and Lys-153.

The protein belongs to the peptidase S24 family. As to quaternary structure, homodimer.

The enzyme catalyses Hydrolysis of Ala-|-Gly bond in repressor LexA.. Its function is as follows. Represses a number of genes involved in the response to DNA damage (SOS response), including recA and lexA. In the presence of single-stranded DNA, RecA interacts with LexA causing an autocatalytic cleavage which disrupts the DNA-binding part of LexA, leading to derepression of the SOS regulon and eventually DNA repair. This is LexA repressor from Dechloromonas aromatica (strain RCB).